A 115-amino-acid polypeptide reads, in one-letter code: U3-lycotoxin-Ls1v (115 aa).

The first 20 residues, 1–20, serve as a signal peptide directing secretion; that stretch reads MKFVLLFGVLLVTLFSHSSA. A propeptide spanning residues 21 to 44 is cleaved from the precursor; it reads EMLDDFDQADEDELLSLIEKEEAR. Cystine bridges form between C48-C63, C55-C72, C62-C87, and C74-C85.

Belongs to the neurotoxin 19 (CSTX) family. 01 subfamily. Expressed by the venom gland.

The protein resides in the secreted. The polypeptide is U3-lycotoxin-Ls1v (Lycosa singoriensis (Wolf spider)).